The sequence spans 78 residues: D-alanyl carrier protein (78 aa).

Residues 1 to 77 (MAVKEEVVEI…KVIAKVESLI (77 aa)) form the Carrier domain. At Ser-35 the chain carries O-(pantetheine 4'-phosphoryl)serine.

It belongs to the DltC family. 4'-phosphopantetheine is transferred from CoA to a specific serine of apo-DCP.

It is found in the cytoplasm. It participates in cell wall biogenesis; lipoteichoic acid biosynthesis. In terms of biological role, carrier protein involved in the D-alanylation of lipoteichoic acid (LTA). The loading of thioester-linked D-alanine onto DltC is catalyzed by D-alanine--D-alanyl carrier protein ligase DltA. The DltC-carried D-alanyl group is further transferred to cell membrane phosphatidylglycerol (PG) by forming an ester bond, probably catalyzed by DltD. D-alanylation of LTA plays an important role in modulating the properties of the cell wall in Gram-positive bacteria, influencing the net charge of the cell wall. The protein is D-alanyl carrier protein of Leuconostoc citreum (strain KM20).